Consider the following 455-residue polypeptide: Kynurenine 3-monooxygenase (455 aa).

This sequence belongs to the aromatic-ring hydroxylase family. KMO subfamily. Requires FAD as cofactor.

It catalyses the reaction L-kynurenine + NADPH + O2 + H(+) = 3-hydroxy-L-kynurenine + NADP(+) + H2O. The protein operates within cofactor biosynthesis; NAD(+) biosynthesis; quinolinate from L-kynurenine: step 1/3. In terms of biological role, catalyzes the hydroxylation of L-kynurenine (L-Kyn) to form 3-hydroxy-L-kynurenine (L-3OHKyn). Required for synthesis of quinolinic acid. The protein is Kynurenine 3-monooxygenase of Stenotrophomonas maltophilia (strain K279a).